A 448-amino-acid polypeptide reads, in one-letter code: Cysteine--tRNA ligase (448 aa).

Cys-27 contributes to the Zn(2+) binding site. Residues 29–39 (PTVYNYIHVGN) carry the 'HIGH' region motif. Residues Cys-210, His-235, and Glu-239 each contribute to the Zn(2+) site. Positions 267–271 (KMSKS) match the 'KMSKS' region motif. Lys-270 contacts ATP.

This sequence belongs to the class-I aminoacyl-tRNA synthetase family. As to quaternary structure, monomer. Requires Zn(2+) as cofactor.

The protein resides in the cytoplasm. It carries out the reaction tRNA(Cys) + L-cysteine + ATP = L-cysteinyl-tRNA(Cys) + AMP + diphosphate. This chain is Cysteine--tRNA ligase, found in Lactococcus lactis subsp. lactis (strain IL1403) (Streptococcus lactis).